Consider the following 317-residue polypeptide: ATP synthase gamma chain (317 aa).

The protein belongs to the ATPase gamma chain family. As to quaternary structure, F-type ATPases have 2 components, CF(1) - the catalytic core - and CF(0) - the membrane proton channel. CF(1) has five subunits: alpha(3), beta(3), gamma(1), delta(1), epsilon(1). CF(0) has three main subunits: a, b and c.

It localises to the cellular thylakoid membrane. Functionally, produces ATP from ADP in the presence of a proton gradient across the membrane. The gamma chain is believed to be important in regulating ATPase activity and the flow of protons through the CF(0) complex. In Synechococcus sp. (strain CC9902), this protein is ATP synthase gamma chain.